A 247-amino-acid chain; its full sequence is Ribonuclease 3 (247 aa).

The region spanning 21-149 (VDHQPLLDHL…LFGAIFRQHG (129 aa)) is the RNase III domain. E62 serves as a coordination point for Mg(2+). Residue D66 is part of the active site. Mg(2+) contacts are provided by D135 and E138. E138 is an active-site residue. The DRBM domain occupies 176-244 (DWKTTLQEEL…AHQAFRKLRE (69 aa)).

It belongs to the ribonuclease III family. Homodimer. Requires Mg(2+) as cofactor.

Its subcellular location is the cytoplasm. It carries out the reaction Endonucleolytic cleavage to 5'-phosphomonoester.. Functionally, digests double-stranded RNA. Involved in the processing of primary rRNA transcript to yield the immediate precursors to the large and small rRNAs (23S and 16S). Processes some mRNAs, and tRNAs when they are encoded in the rRNA operon. Processes pre-crRNA and tracrRNA of type II CRISPR loci if present in the organism. The protein is Ribonuclease 3 of Corynebacterium glutamicum (strain ATCC 13032 / DSM 20300 / JCM 1318 / BCRC 11384 / CCUG 27702 / LMG 3730 / NBRC 12168 / NCIMB 10025 / NRRL B-2784 / 534).